The following is a 170-amino-acid chain: Ribosome maturation factor RimM (170 aa).

Residues 93-165 (PDEFHDHELI…RVVIDPPPGL (73 aa)) form the PRC barrel domain.

The protein belongs to the RimM family. Binds ribosomal protein uS19.

It localises to the cytoplasm. In terms of biological role, an accessory protein needed during the final step in the assembly of 30S ribosomal subunit, possibly for assembly of the head region. Essential for efficient processing of 16S rRNA. May be needed both before and after RbfA during the maturation of 16S rRNA. It has affinity for free ribosomal 30S subunits but not for 70S ribosomes. This is Ribosome maturation factor RimM from Thermobifida fusca (strain YX).